We begin with the raw amino-acid sequence, 148 residues long: Copper transport protein ctr6 (148 aa).

The Extracellular portion of the chain corresponds to 1–33 (MNHGGNSTMRHCSMKMTFNTDYDNLCIVFKSWH). The chain crosses the membrane as a helical span at residues 34 to 54 (IGNLSQFLLSLLAIAILGYLF). Over 55–108 (ERLRSFTSLKETEFQRGYAGQQSEGLLTHHSKSLKSGRPFRLCALYAVQLVFSY) the chain is Cytoplasmic. Residues 109–129 (FLMLVAMTYNAYVILAIAIGA) form a helical membrane-spanning segment. The Extracellular segment spans residues 130-148 (AFGYRRSHCDTVQTVGLCH).

Belongs to the copper transporter (Ctr) (TC 1.A.56) family. SLC31A subfamily. In terms of assembly, homotrimer.

Its subcellular location is the vacuole membrane. Mobilizes stored copper from the vacuole to the cytoplasm under conditions of copper limitation. This is Copper transport protein ctr6 (ctr6) from Schizosaccharomyces pombe (strain 972 / ATCC 24843) (Fission yeast).